A 149-amino-acid polypeptide reads, in one-letter code: Calmodulin-2 (149 aa).

Residue alanine 2 is modified to N-acetylalanine. 4 EF-hand domains span residues 8–43, 44–79, 81–116, and 117–149; these read EQIAEFKEAFSLFDKDGDGCITTKELGTVMRSLGQN, PTEAELQDMINEVDADGNGTIDFPEFLNLMAKKMKD, DSEEELKEAFRVFDKDQNGFISAAELRHVMTNLGEK, and LTDEEVDEMIREADVDGDGQINYEEFVKVMMAK. Ca(2+) contacts are provided by aspartate 21, aspartate 23, aspartate 25, cysteine 27, glutamate 32, aspartate 57, aspartate 59, asparagine 61, threonine 63, glutamate 68, aspartate 94, aspartate 96, asparagine 98, and glutamate 105. The residue at position 116 (lysine 116) is an N6,N6,N6-trimethyllysine. 5 residues coordinate Ca(2+): aspartate 130, aspartate 132, aspartate 134, glutamine 136, and glutamate 141.

The protein belongs to the calmodulin family.

Its function is as follows. Calmodulin mediates the control of a large number of enzymes, ion channels and other proteins by Ca(2+). Among the enzymes to be stimulated by the calmodulin-Ca(2+) complex are a number of protein kinases and phosphatases. This Oryza sativa subsp. indica (Rice) protein is Calmodulin-2 (CAM2).